The following is a 383-amino-acid chain: Probable protein phosphatase 2C 13 (383 aa).

The PPM-type phosphatase domain maps to 78–349 (RSGSFADIRS…DNMTVIVICF (272 aa)). 4 residues coordinate Mn(2+): aspartate 121, glycine 122, aspartate 297, and aspartate 340.

It belongs to the PP2C family. Requires Mg(2+) as cofactor. It depends on Mn(2+) as a cofactor.

The catalysed reaction is O-phospho-L-seryl-[protein] + H2O = L-seryl-[protein] + phosphate. It catalyses the reaction O-phospho-L-threonyl-[protein] + H2O = L-threonyl-[protein] + phosphate. This is Probable protein phosphatase 2C 13 from Arabidopsis thaliana (Mouse-ear cress).